The chain runs to 102 residues: NADH-quinone oxidoreductase subunit K (102 aa).

3 helical membrane passes run 6-26 (LGQG…GVLV), 30-50 (LLFM…AFIV), and 64-84 (FILV…LILL).

Belongs to the complex I subunit 4L family. NDH-1 is composed of 14 different subunits. Subunits NuoA, H, J, K, L, M, N constitute the membrane sector of the complex.

It localises to the cell inner membrane. It carries out the reaction a quinone + NADH + 5 H(+)(in) = a quinol + NAD(+) + 4 H(+)(out). Its function is as follows. NDH-1 shuttles electrons from NADH, via FMN and iron-sulfur (Fe-S) centers, to quinones in the respiratory chain. The immediate electron acceptor for the enzyme in this species is believed to be ubiquinone. Couples the redox reaction to proton translocation (for every two electrons transferred, four hydrogen ions are translocated across the cytoplasmic membrane), and thus conserves the redox energy in a proton gradient. In Acidiphilium cryptum (strain JF-5), this protein is NADH-quinone oxidoreductase subunit K.